The chain runs to 367 residues: Heme A synthase (367 aa).

The next 5 membrane-spanning stretches (helical) occupy residues 25–45 (ALRL…LVGG), 111–131 (LIAR…WLTG), 139–159 (WPLV…WWMV), 174–194 (LATH…IMRG), and 210–230 (GFAA…ALVA). His274 lines the heme pocket. 3 consecutive transmembrane segments (helical) span residues 276 to 296 (IGAY…LRAA), 305 to 325 (AVVL…TLLM), and 327 to 347 (VPLH…GFAV). Position 335 (His335) interacts with heme.

The protein belongs to the COX15/CtaA family. Type 2 subfamily. In terms of assembly, interacts with CtaB. Requires heme b as cofactor.

The protein localises to the cell membrane. The catalysed reaction is Fe(II)-heme o + 2 A + H2O = Fe(II)-heme a + 2 AH2. It participates in porphyrin-containing compound metabolism; heme A biosynthesis; heme A from heme O: step 1/1. Catalyzes the conversion of heme O to heme A by two successive hydroxylations of the methyl group at C8. The first hydroxylation forms heme I, the second hydroxylation results in an unstable dihydroxymethyl group, which spontaneously dehydrates, resulting in the formyl group of heme A. In Rhizobium etli (strain CIAT 652), this protein is Heme A synthase.